A 262-amino-acid polypeptide reads, in one-letter code: 5'-nucleotidase SurE (262 aa).

A divalent metal cation is bound by residues Asp-9, Asp-10, Ser-40, and Asn-95.

The protein belongs to the SurE nucleotidase family. The cofactor is a divalent metal cation.

Its subcellular location is the cytoplasm. It carries out the reaction a ribonucleoside 5'-phosphate + H2O = a ribonucleoside + phosphate. Functionally, nucleotidase that shows phosphatase activity on nucleoside 5'-monophosphates. This chain is 5'-nucleotidase SurE, found in Aliarcobacter butzleri (strain RM4018) (Arcobacter butzleri).